Consider the following 416-residue polypeptide: PAQEAHQVAVAAFREAQVQYLNNQPWQTIKNTLTHNGYRYTNTQCPAADMKIGAQDIFPNAYQGKGVCSSDTTNTQHATNLWMSTLSVNENGKDKTLFCGIRHGVLSPYHVKDPILRQVGAENRAREVLTAALFSQPALLTKALQDEVVSLRLVSVGLLTTSTIVGNEDAMVQDQMRAWQSLTQPGNVIHLNIRNKEGELRTVKIKPEIAAFNTGVNELTLKLGLGHQASDNYNIGALHQLLGHDLRPEAPPGGWVGEWLAQHPDNHAVVNTLVRQIKDIWNSKLHHTDGNEPYKFAQRLAILAHEIGAVPAWNCKSGKDRTGMQDAEIKREVISLHQKATLTPLASLPDSDGQEIFQKVLLNSGNLEIQKQNTGGAGNKVLKNLPPEVLNLSYQRRIGDANIWQLVKGLSSLVTS.

Cys315 is an active-site residue. Residues 315–321 (CKSGKDR) carry the CX5R motif motif.

This sequence belongs to the phosphatase IpgD/SopB family.

It localises to the secreted. Its function is as follows. Converts phosphatidylinositol 3,4,5-trisphosphate (PtdIns 3,4,5-P3) to PtdIns 3-P and prevents the transition of PtdIns 3-P to PtdIns 3,5-P2. It is one of the known effectors injected by Salmonella into the host cell and is required for invasion and for an efficient generation and maintenance of Salmonella-containing vacuole (SVC). Alteration of the phosphoinositide composition of the plasma membrane causes membrane ruffling and actin cytoskeleton rearrangements. The persistence of PtdIns 3-P diverts the SCV from the endocytic pathway resulting in enlarged vesicles, which are essential to create a favorable environment where Salmonella can replicate and avoid immune defenses of the host cell. The polypeptide is Inositol phosphate phosphatase SopB (sopB) (Salmonella bongori).